A 238-amino-acid chain; its full sequence is tRNA (guanine-N(7)-)-methyltransferase (238 aa).

Glu68, Glu93, Asp120, and Asp143 together coordinate S-adenosyl-L-methionine. Asp143 is an active-site residue. Substrate is bound by residues Lys147, Asp179, and 216 to 219; that span reads TKFE.

The protein belongs to the class I-like SAM-binding methyltransferase superfamily. TrmB family.

The enzyme catalyses guanosine(46) in tRNA + S-adenosyl-L-methionine = N(7)-methylguanosine(46) in tRNA + S-adenosyl-L-homocysteine. It functions in the pathway tRNA modification; N(7)-methylguanine-tRNA biosynthesis. Functionally, catalyzes the formation of N(7)-methylguanine at position 46 (m7G46) in tRNA. The polypeptide is tRNA (guanine-N(7)-)-methyltransferase (Marinobacter nauticus (strain ATCC 700491 / DSM 11845 / VT8) (Marinobacter aquaeolei)).